The primary structure comprises 105 residues: Large ribosomal subunit protein eL36 (105 aa).

It belongs to the eukaryotic ribosomal protein eL36 family. In terms of assembly, component of the large ribosomal subunit.

Its subcellular location is the cytoplasm. The protein resides in the cytosol. Component of the large ribosomal subunit. The ribosome is a large ribonucleoprotein complex responsible for the synthesis of proteins in the cell. This is Large ribosomal subunit protein eL36 (rpl36) from Danio rerio (Zebrafish).